A 208-amino-acid polypeptide reads, in one-letter code: Platelet-activating factor receptor (208 aa).

The Extracellular portion of the chain corresponds to 1 to 16 (MEPHDSSHVDSEFRYT). The helical transmembrane segment at 17–38 (LFPIVYSIIFVLGVIANGYVLW) threads the bilayer. Topologically, residues 39–54 (VFARLYPSKKFNEIKI) are cytoplasmic. The helical transmembrane segment at 55 to 74 (FMVNLTMADMLFLITLPLWI) threads the bilayer. The Extracellular portion of the chain corresponds to 75–91 (VYYQNGGNWIFPKFLCN). Cysteine 90 and cysteine 173 are disulfide-bonded. A helical transmembrane segment spans residues 92-113 (LAGCLFFINTYCSVAFLGVITY). The Cytoplasmic portion of the chain corresponds to 114–133 (NRFQAVTRPIKTAQANTRKR). Residues 134–155 (GISLSLVIWVAIVGAASYFFIL) traverse the membrane as a helical segment. Residues 156-184 (DSTNTVPNSAGSGNITRCFEHYEKGSVPV) are Extracellular-facing. Asparagine 169 carries N-linked (GlcNAc...) asparagine glycosylation. Residues 185-205 (LIIHIFIVFSFFLVFLIILFC) form a helical membrane-spanning segment. Topologically, residues 206-208 (NLV) are cytoplasmic.

The protein belongs to the G-protein coupled receptor 1 family. Interacts with ARRB1.

It localises to the cell membrane. Its function is as follows. Receptor for platelet activating factor, a chemotactic phospholipid mediator that possesses potent inflammatory, smooth-muscle contractile and hypotensive activity. Seems to mediate its action via a G protein that activates a phosphatidylinositol-calcium second messenger system. This Macaca mulatta (Rhesus macaque) protein is Platelet-activating factor receptor (PTAFR).